The primary structure comprises 479 residues: FAD-dependent monooxygenase ausM (479 aa).

FAD is bound by residues E40, G54, and R113. Y224 is an active-site residue. N289 is a glycosylation site (N-linked (GlcNAc...) asparagine). Residues D316 and A329 each contribute to the FAD site. A helical membrane pass occupies residues 449 to 469 (TLPWLVISLPVLASMLCYLVY).

Belongs to the paxM FAD-dependent monooxygenase family. Requires FAD as cofactor.

The protein localises to the membrane. The protein operates within secondary metabolite biosynthesis; terpenoid biosynthesis. Its function is as follows. FAD-dependent monooxygenase; part of the gene cluster B that mediates the biosynthesis of austinol and dehydroaustinol, two fungal meroterpenoids. The first step of the pathway is the synthesis of 3,5-dimethylorsellinic acid by the polyketide synthase ausA. 3,5-dimethylorsellinic acid is then prenylated by the polyprenyl transferase ausN. Further epoxidation by the FAD-dependent monooxygenase ausM and cyclization by the probable terpene cyclase ausL lead to the formation of protoaustinoid A. Protoaustinoid A is then oxidized to spiro-lactone preaustinoid A3 by the combined action of the FAD-binding monooxygenases ausB and ausC, and the dioxygenase ausE. Acid-catalyzed keto-rearrangement and ring contraction of the tetraketide portion of preaustinoid A3 by ausJ lead to the formation of preaustinoid A4. The aldo-keto reductase ausK, with the help of ausH, is involved in the next step by transforming preaustinoid A4 into isoaustinone which is in turn hydroxylated by the P450 monooxygenase ausI to form austinolide. Finally, the cytochrome P450 monooxygenase ausG modifies austinolide to austinol. Austinol can be further modified to dehydroaustinol which forms a diffusible complex with diorcinol that initiates conidiation. Due to genetic rearrangements of the clusters and the subsequent loss of some enzymes, the end products of the Emericella nidulans austinoid biosynthesis clusters are austinol and dehydroaustinol, even if additional enzymes, such as the O-acetyltransferase ausQ and the cytochrome P450 monooxygenase ausR are still functional. This is FAD-dependent monooxygenase ausM from Emericella nidulans (strain FGSC A4 / ATCC 38163 / CBS 112.46 / NRRL 194 / M139) (Aspergillus nidulans).